We begin with the raw amino-acid sequence, 356 residues long: tRNA N6-adenosine threonylcarbamoyltransferase (356 aa).

Residues H115 and H119 each contribute to the Fe cation site. Substrate is bound by residues 138 to 142 (LVSGG), D171, G184, and N283. D311 is a binding site for Fe cation.

Belongs to the KAE1 / TsaD family. Fe(2+) is required as a cofactor.

It localises to the cytoplasm. The catalysed reaction is L-threonylcarbamoyladenylate + adenosine(37) in tRNA = N(6)-L-threonylcarbamoyladenosine(37) in tRNA + AMP + H(+). Required for the formation of a threonylcarbamoyl group on adenosine at position 37 (t(6)A37) in tRNAs that read codons beginning with adenine. Is involved in the transfer of the threonylcarbamoyl moiety of threonylcarbamoyl-AMP (TC-AMP) to the N6 group of A37, together with TsaE and TsaB. TsaD likely plays a direct catalytic role in this reaction. This is tRNA N6-adenosine threonylcarbamoyltransferase from Prochlorococcus marinus (strain MIT 9303).